The sequence spans 551 residues: Glucose-6-phosphate isomerase 2 (551 aa).

Catalysis depends on Glu359, which acts as the Proton donor. Residues His390 and Lys514 contribute to the active site.

Belongs to the GPI family.

Its subcellular location is the cytoplasm. It carries out the reaction alpha-D-glucose 6-phosphate = beta-D-fructose 6-phosphate. The protein operates within carbohydrate biosynthesis; gluconeogenesis. It functions in the pathway carbohydrate degradation; glycolysis; D-glyceraldehyde 3-phosphate and glycerone phosphate from D-glucose: step 2/4. Catalyzes the reversible isomerization of glucose-6-phosphate to fructose-6-phosphate. This is Glucose-6-phosphate isomerase 2 from Streptomyces coelicolor (strain ATCC BAA-471 / A3(2) / M145).